The primary structure comprises 154 residues: MLYLTRRVETPAQTTASVTLPVDMRVKSRIKVTLNDGRQAGLLLPRGLLLRDGDILSNENGDEFIKVIAADEAVSVVRCADPFMLAKACWHLGNRHVPLQIMPGELRYHHDHVLDDMLRQFGLDVDFAHLPFEPEAGAYASKSHAHNHDQEHSH.

It belongs to the UreE family.

The protein resides in the cytoplasm. Its function is as follows. Involved in urease metallocenter assembly. Binds nickel. Probably functions as a nickel donor during metallocenter assembly. The chain is Urease accessory protein UreE from Escherichia coli O157:H7.